A 252-amino-acid polypeptide reads, in one-letter code: D-aminoacyl-tRNA deacylase (252 aa).

This sequence belongs to the DtdA deacylase family. In terms of assembly, monomer. It depends on Zn(2+) as a cofactor.

It catalyses the reaction a D-aminoacyl-tRNA + H2O = a tRNA + a D-alpha-amino acid + H(+). It carries out the reaction glycyl-tRNA(Ala) + H2O = tRNA(Ala) + glycine + H(+). Its function is as follows. D-aminoacyl-tRNA deacylase with broad substrate specificity. By recycling D-aminoacyl-tRNA to D-amino acids and free tRNA molecules, this enzyme counteracts the toxicity associated with the formation of D-aminoacyl-tRNA entities in vivo. The polypeptide is D-aminoacyl-tRNA deacylase (Pyrobaculum islandicum (strain DSM 4184 / JCM 9189 / GEO3)).